The primary structure comprises 43 residues: Protein PsbN (43 aa).

The helical transmembrane segment at 7–27 (LSIGIAVVVIAVTGFSIYTAF) threads the bilayer.

The protein belongs to the PsbN family.

Its subcellular location is the cellular thylakoid membrane. Functionally, may play a role in photosystem I and II biogenesis. The protein is Protein PsbN of Picosynechococcus sp. (strain ATCC 27264 / PCC 7002 / PR-6) (Agmenellum quadruplicatum).